We begin with the raw amino-acid sequence, 120 residues long: Large ribosomal subunit protein uL18 (120 aa).

It belongs to the universal ribosomal protein uL18 family. As to quaternary structure, part of the 50S ribosomal subunit; part of the 5S rRNA/L5/L18/L25 subcomplex. Contacts the 5S and 23S rRNAs.

This is one of the proteins that bind and probably mediate the attachment of the 5S RNA into the large ribosomal subunit, where it forms part of the central protuberance. The sequence is that of Large ribosomal subunit protein uL18 from Bartonella quintana (strain Toulouse) (Rochalimaea quintana).